Reading from the N-terminus, the 336-residue chain is Aspartate--ammonia ligase (336 aa).

Belongs to the class-II aminoacyl-tRNA synthetase family. AsnA subfamily.

It localises to the cytoplasm. It carries out the reaction L-aspartate + NH4(+) + ATP = L-asparagine + AMP + diphosphate + H(+). Its pathway is amino-acid biosynthesis; L-asparagine biosynthesis; L-asparagine from L-aspartate (ammonia route): step 1/1. The chain is Aspartate--ammonia ligase from Clostridium perfringens (strain ATCC 13124 / DSM 756 / JCM 1290 / NCIMB 6125 / NCTC 8237 / Type A).